A 291-amino-acid polypeptide reads, in one-letter code: Methionine aminopeptidase (291 aa).

H118 is a binding site for substrate. The a divalent metal cation site is built by D135, D146, and H209. Position 216 (H216) interacts with substrate. The a divalent metal cation site is built by E241 and E273.

The protein belongs to the peptidase M24A family. Methionine aminopeptidase type 1 subfamily. In terms of assembly, monomer. The cofactor is Co(2+). Zn(2+) serves as cofactor. It depends on Mn(2+) as a cofactor. Requires Fe(2+) as cofactor.

It carries out the reaction Release of N-terminal amino acids, preferentially methionine, from peptides and arylamides.. Its function is as follows. Removes the N-terminal methionine from nascent proteins. The N-terminal methionine is often cleaved when the second residue in the primary sequence is small and uncharged (Met-Ala-, Cys, Gly, Pro, Ser, Thr, or Val). Requires deformylation of the N(alpha)-formylated initiator methionine before it can be hydrolyzed. In Chlamydia pneumoniae (Chlamydophila pneumoniae), this protein is Methionine aminopeptidase.